Consider the following 285-residue polypeptide: Kanamycin B dioxygenase (285 aa).

The protein belongs to the PhyH family. Fe cation is required as a cofactor.

The enzyme catalyses kanamycin B + 2-oxoglutarate + O2 = 2'-dehydrokanamycin A + succinate + NH4(+) + CO2. The protein operates within antibiotic biosynthesis; kanamycin biosynthesis. Its function is as follows. Mediates the conversion of kanamycin B into 2'-dehydrokanamycin A during the transformation of kanamycin B to kanamycin A. The sequence is that of Kanamycin B dioxygenase (kanJ) from Streptomyces kanamyceticus.